An 831-amino-acid chain; its full sequence is Phenylalanine--tRNA ligase beta subunit (831 aa).

The tRNA-binding domain maps to 44–155 (GPVDGPVTVG…GAAEPGADGA (112 aa)). One can recognise a B5 domain in the interval 414-489 (WSPPPIRMGV…RLEGLEVIPS (76 aa)). The Mg(2+) site is built by D467, D473, E476, and E477. Residues 737–830 (SPYPAVFQDV…AAERVGAVLR (94 aa)) form the FDX-ACB domain.

This sequence belongs to the phenylalanyl-tRNA synthetase beta subunit family. Type 1 subfamily. In terms of assembly, tetramer of two alpha and two beta subunits. Mg(2+) is required as a cofactor.

The protein localises to the cytoplasm. It carries out the reaction tRNA(Phe) + L-phenylalanine + ATP = L-phenylalanyl-tRNA(Phe) + AMP + diphosphate + H(+). This Mycobacterium bovis (strain ATCC BAA-935 / AF2122/97) protein is Phenylalanine--tRNA ligase beta subunit.